We begin with the raw amino-acid sequence, 426 residues long: Cytochrome c biogenesis protein CcsB (426 aa).

Helical transmembrane passes span 14–34, 72–92, and 162–182; these read LKIAILLLLLIAISCAAGTLI, SFWFLFLLIWLGLALSVCSFR, and LGPILIHLGMILLMIGATYGS.

This sequence belongs to the Ccs1/CcsB family. May interact with CcsA.

Its subcellular location is the cellular thylakoid membrane. Its function is as follows. Required during biogenesis of c-type cytochromes (cytochrome c6 and cytochrome f) at the step of heme attachment. This is Cytochrome c biogenesis protein CcsB from Prochlorococcus marinus (strain NATL1A).